We begin with the raw amino-acid sequence, 681 residues long: Ribosomal L1 domain-containing protein CG13096 (681 aa).

Disordered regions lie at residues methionine 1–lysine 248 and aspartate 579–glutamate 681. 2 positions are modified to phosphoserine: serine 15 and serine 17. Basic and acidic residues predominate over residues valine 54–glutamine 74. Phosphoserine is present on serine 89. Residues lysine 103–glycine 112 are compositionally biased toward low complexity. The residue at position 128 (serine 128) is a Phosphoserine. Over residues glutamine 189–proline 217 the composition is skewed to low complexity. Residues lysine 599–alanine 610 show a composition bias toward basic and acidic residues. A compositionally biased stretch (acidic residues) spans glutamate 611–glutamate 681.

It belongs to the universal ribosomal protein uL1 family. Highly divergent.

This Drosophila melanogaster (Fruit fly) protein is Ribosomal L1 domain-containing protein CG13096.